A 62-amino-acid chain; its full sequence is Prokaryotic ubiquitin-like protein Pup (62 aa).

Residues 1 to 29 form a disordered region; sequence MSQQSLNAPGPGAEDGNDPEAVTGGQTFA. Positions 21-56 are ARC ATPase binding; that stretch reads AVTGGQTFASAQAADDLLDEIDSVLESNAETFVRSF. Glutamine 62 is subject to Deamidated glutamine. Residue glutamine 62 forms an Isoglutamyl lysine isopeptide (Gln-Lys) (interchain with K-? in acceptor proteins) linkage.

The protein belongs to the prokaryotic ubiquitin-like protein family. Strongly interacts with the proteasome-associated ATPase ARC through a hydrophobic interface; the interacting region of Pup lies in its C-terminal half. There is one Pup binding site per ARC hexamer ring. Is modified by deamidation of its C-terminal glutamine to glutamate by the deamidase Dop, a prerequisite to the subsequent pupylation process.

The protein operates within protein degradation; proteasomal Pup-dependent pathway. Its function is as follows. Protein modifier that is covalently attached to lysine residues of substrate proteins, thereby targeting them for proteasomal degradation. The tagging system is termed pupylation. The chain is Prokaryotic ubiquitin-like protein Pup from Brachybacterium faecium (strain ATCC 43885 / DSM 4810 / JCM 11609 / LMG 19847 / NBRC 14762 / NCIMB 9860 / 6-10).